A 373-amino-acid polypeptide reads, in one-letter code: ATP phosphoribosyltransferase regulatory subunit (373 aa).

The protein belongs to the class-II aminoacyl-tRNA synthetase family. HisZ subfamily. In terms of assembly, heteromultimer composed of HisG and HisZ subunits.

Its subcellular location is the cytoplasm. It participates in amino-acid biosynthesis; L-histidine biosynthesis; L-histidine from 5-phospho-alpha-D-ribose 1-diphosphate: step 1/9. In terms of biological role, required for the first step of histidine biosynthesis. May allow the feedback regulation of ATP phosphoribosyltransferase activity by histidine. The protein is ATP phosphoribosyltransferase regulatory subunit of Rhizobium etli (strain ATCC 51251 / DSM 11541 / JCM 21823 / NBRC 15573 / CFN 42).